The primary structure comprises 394 residues: Deoxyguanosinetriphosphate triphosphohydrolase-like protein (394 aa).

Positions 1 to 36 (MSQAPYFVPRAPYAEDPSKSKGRRFKEDESRTRTPF) are disordered. Over residues 25–36 (FKEDESRTRTPF) the composition is skewed to basic and acidic residues. The HD domain maps to 70–210 (RLTHTLEVAQ…AALADDIAYN (141 aa)).

Belongs to the dGTPase family. Type 2 subfamily.

This Caulobacter vibrioides (strain ATCC 19089 / CIP 103742 / CB 15) (Caulobacter crescentus) protein is Deoxyguanosinetriphosphate triphosphohydrolase-like protein.